The primary structure comprises 790 residues: Serine/threonine-protein kinase DCLK3 (790 aa).

The interval 1 to 37 (MPAAPVLRPPPPPATPAPPAPSRPAPPIPGHRGPCDH) is disordered. The segment covering 7 to 29 (LRPPPPPATPAPPAPSRPAPPIP) has biased composition (pro residues). The 87-residue stretch at 97–183 (RVVTVVKLGG…KEPLTLKSIQ (87 aa)) folds into the Doublecortin domain. Over residues 201 to 218 (HSRVPSPRLRSRLPSKLL) the composition is skewed to low complexity. 2 disordered regions span residues 201 to 290 (HSRV…SGEK) and 315 to 506 (LQLG…KGII). Basic and acidic residues-rich tracts occupy residues 332–345 (DLGR…EKLV), 352–400 (RPSE…ESQD), 425–434 (IDMRREDRHT), and 457–496 (TRGE…ERPS). One can recognise a Protein kinase domain in the interval 514 to 771 (YDIGGVIGDG…AEQVLQHPWI (258 aa)). ATP is bound by residues 520-528 (IGDGNFATV) and K543. D635 acts as the Proton acceptor in catalysis.

This sequence belongs to the protein kinase superfamily. CAMK Ser/Thr protein kinase family. CaMK subfamily. As to expression, highly expressed in brain and to a lower extent in liver and kidney.

The protein localises to the cytoplasm. It is found in the nucleus. The enzyme catalyses L-seryl-[protein] + ATP = O-phospho-L-seryl-[protein] + ADP + H(+). It catalyses the reaction L-threonyl-[protein] + ATP = O-phospho-L-threonyl-[protein] + ADP + H(+). This is Serine/threonine-protein kinase DCLK3 (Dclk3) from Mus musculus (Mouse).